The sequence spans 1022 residues: Sodium/potassium-transporting ATPase subunit alpha-1 (1022 aa).

A propeptide spanning residues 1–5 (MGRGT) is cleaved from the precursor. A compositionally biased stretch (basic and acidic residues) spans 1–10 (MGRGTGHDQY). Positions 1–34 (MGRGTGHDQYELAATSEGGRKKKRDKKKKDMDDL) are disordered. At 6 to 86 (GHDQYELAAT…NALTPPPTTP (81 aa)) the chain is on the cytoplasmic side. Residue S16 is modified to Phosphoserine; by PKC. The interaction with phosphoinositide-3 kinase stretch occupies residues 81–83 (PPP). A helical membrane pass occupies residues 87-107 (EWVKFCRQLFGGFSMLLWIGA). The Extracellular segment spans residues 108 to 130 (ILCFLAYGIQAASEDEPANDNLY). Residues 131–151 (LGVVLSAVVIITGCFSYYQEA) form a helical membrane-spanning segment. Residues 152-287 (KSSRIMDSFK…VGRTPISIEI (136 aa)) are Cytoplasmic-facing. The disordered stretch occupies residues 213–234 (DNSSLTGESEPQTRSPDFSNEN). The helical transmembrane segment at 288 to 307 (EHFIHIITGVAVFLGVSFFI) threads the bilayer. Residues 308-319 (LSLILGYAWLEA) lie on the Extracellular side of the membrane. Residues 320–337 (VIFLIGIIVANVPEGLLA) form a helical membrane-spanning segment. The Cytoplasmic portion of the chain corresponds to 338–771 (TVTVCLTLTA…EEGRLIFDNL (434 aa)). The active-site 4-aspartylphosphate intermediate is D375. K486 contributes to the ATP binding site. Residues D716 and D720 each coordinate Mg(2+). The chain crosses the membrane as a helical span at residues 772–791 (KKSIAYTLTSNIPEITPFLL). The Extracellular segment spans residues 792-801 (FIIANIPLPL). A helical transmembrane segment spans residues 802–822 (GTVTILCIDLGTDMVPAISLA). Residues 823–842 (YEAAESDIMKRQPRNPRTDK) lie on the Cytoplasmic side of the membrane. The helical transmembrane segment at 843–865 (LVNERLISIAYGQIGMMQATAGF) threads the bilayer. Over 866-917 (FTYFVILAENGFLPSTLLGIRVKWDDKYVNDLEDSYGQQWTYEQRKIVEYTC) the chain is Extracellular. A helical transmembrane segment spans residues 918–937 (HTSFFASIVIVQWADLIICK). The Cytoplasmic segment spans residues 938–950 (TRRNSIIQQGMKN). S942 bears the Phosphoserine; by PKA mark. Residues 951 to 969 (KILIFGLFEETALAAFLSY) form a helical membrane-spanning segment. At 970 to 984 (CPGMDVALRMYPLKP) the chain is on the extracellular side. Residues 985–1005 (SWWFCAFPYSLLIFLYDEARR) form a helical membrane-spanning segment. Residues 1006–1022 (FILRRNPDGWVERETYY) lie on the Cytoplasmic side of the membrane.

It belongs to the cation transport ATPase (P-type) (TC 3.A.3) family. Type IIC subfamily. In terms of assembly, the sodium/potassium-transporting ATPase is composed of a catalytic alpha subunit, an auxiliary non-catalytic beta subunit and an additional regulatory subunit.

The protein resides in the cell membrane. It is found in the sarcolemma. It catalyses the reaction K(+)(out) + Na(+)(in) + ATP + H2O = K(+)(in) + Na(+)(out) + ADP + phosphate + H(+). This is the catalytic component of the active enzyme, which catalyzes the hydrolysis of ATP coupled with the exchange of sodium and potassium ions across the plasma membrane. This action creates the electrochemical gradient of sodium and potassium ions, providing the energy for active transport of various nutrients. In Anguilla anguilla (European freshwater eel), this protein is Sodium/potassium-transporting ATPase subunit alpha-1 (atp1a1).